The chain runs to 177 residues: MPGQMPVAPGTNPDQSFFDDLSGEVGDKGFLVTSTEDLFNWARTGSLWWMTFGLACCAVEMIHVNMPRYDMERFGVAPRASPRQSDVMIVAGTLCNKMAPALRRVYDQMSNPKYVISMGSCANGGGYYHYSYSVVRGCDRIVPVDIYVPGCPPTAEALLYGVMQLQRKIRRTGTIER.

Residues cysteine 56, cysteine 57, cysteine 121, and cysteine 151 each contribute to the [4Fe-4S] cluster site.

The protein belongs to the complex I 20 kDa subunit family. As to quaternary structure, NDH-1 is composed of 14 different subunits. Subunits NuoB, C, D, E, F, and G constitute the peripheral sector of the complex. [4Fe-4S] cluster is required as a cofactor.

The protein resides in the cell inner membrane. It carries out the reaction a quinone + NADH + 5 H(+)(in) = a quinol + NAD(+) + 4 H(+)(out). NDH-1 shuttles electrons from NADH, via FMN and iron-sulfur (Fe-S) centers, to quinones in the respiratory chain. Couples the redox reaction to proton translocation (for every two electrons transferred, four hydrogen ions are translocated across the cytoplasmic membrane), and thus conserves the redox energy in a proton gradient. The protein is NADH-quinone oxidoreductase subunit B of Sphingopyxis alaskensis (strain DSM 13593 / LMG 18877 / RB2256) (Sphingomonas alaskensis).